The primary structure comprises 502 residues: Galactose/methyl galactoside import ATP-binding protein MglA (502 aa).

ABC transporter domains follow at residues 10–245 (LEMT…VGRE) and 255–502 (NTPK…SRYL). 42–49 (GENGAGKS) lines the ATP pocket.

This sequence belongs to the ABC transporter superfamily. Galactose/methyl galactoside importer (TC 3.A.1.2.3) family. As to quaternary structure, the complex is composed of one ATP-binding protein (MglA), two transmembrane proteins (MglC) and a solute-binding protein (MglB).

It localises to the cell inner membrane. It carries out the reaction D-galactose(out) + ATP + H2O = D-galactose(in) + ADP + phosphate + H(+). The catalysed reaction is methyl beta-D-galactoside(out) + ATP + H2O = methyl beta-D-galactoside(in) + ADP + phosphate + H(+). Part of the ABC transporter complex MglABC involved in galactose/methyl galactoside import. Responsible for energy coupling to the transport system. This Vibrio vulnificus (strain CMCP6) protein is Galactose/methyl galactoside import ATP-binding protein MglA.